The chain runs to 110 residues: Hydrogenase maturation factor HypA (110 aa).

Histidine 2 provides a ligand contact to Ni(2+). Residues cysteine 70, cysteine 73, cysteine 86, and cysteine 89 each coordinate Zn(2+).

This sequence belongs to the HypA/HybF family.

Involved in the maturation of [NiFe] hydrogenases. Required for nickel insertion into the metal center of the hydrogenase. In Geobacter sulfurreducens (strain ATCC 51573 / DSM 12127 / PCA), this protein is Hydrogenase maturation factor HypA.